The chain runs to 406 residues: Protein IWS1 homolog 2 (406 aa).

Disordered regions lie at residues 1-28 and 41-89; these read MQEL…TGRR and DEVE…SEEV. Residues 10 to 24 show a composition bias toward basic and acidic residues; it reads EWVKELEGENEESKF. Residues 41–56 are compositionally biased toward acidic residues; that stretch reads DEVEEDLDDFTEPADD. A compositionally biased stretch (basic and acidic residues) spans 69 to 78; it reads KKDESGLEKT. Positions 201–284 constitute a TFIIS N-terminal domain; that stretch reads NLLKNWLEPL…NKWGRIIYNK (84 aa).

The protein belongs to the IWS1 family.

It is found in the nucleus. In terms of biological role, transcription factor involved in RNA polymerase II (RNAPII) transcription regulation. Involved in transcription elongation. May function at post-recruitment and elongation steps of transcription. The chain is Protein IWS1 homolog 2 from Arabidopsis thaliana (Mouse-ear cress).